A 74-amino-acid chain; its full sequence is Large ribosomal subunit protein bL31 (74 aa).

4 residues coordinate Zn(2+): Cys-16, Cys-18, Cys-38, and Cys-41.

It belongs to the bacterial ribosomal protein bL31 family. Type A subfamily. As to quaternary structure, part of the 50S ribosomal subunit. Requires Zn(2+) as cofactor.

Its function is as follows. Binds the 23S rRNA. This chain is Large ribosomal subunit protein bL31, found in Mycolicibacterium vanbaalenii (strain DSM 7251 / JCM 13017 / BCRC 16820 / KCTC 9966 / NRRL B-24157 / PYR-1) (Mycobacterium vanbaalenii).